We begin with the raw amino-acid sequence, 568 residues long: Peptidoglycan D,D-transpeptidase FtsI (568 aa).

The helical transmembrane segment at F19–F39 threads the bilayer. S302 acts as the Acyl-ester intermediate in catalysis.

It belongs to the transpeptidase family. FtsI subfamily.

It is found in the cell inner membrane. The catalysed reaction is Preferential cleavage: (Ac)2-L-Lys-D-Ala-|-D-Ala. Also transpeptidation of peptidyl-alanyl moieties that are N-acyl substituents of D-alanine.. It functions in the pathway cell wall biogenesis; peptidoglycan biosynthesis. Its function is as follows. Catalyzes cross-linking of the peptidoglycan cell wall at the division septum. This is Peptidoglycan D,D-transpeptidase FtsI from Buchnera aphidicola subsp. Schizaphis graminum (strain Sg).